Reading from the N-terminus, the 336-residue chain is m7GpppX diphosphatase (336 aa).

The disordered stretch occupies residues 1–36; that stretch reads MADTAPQLKRKREQEAEEAETPSTEEKEAGVGNGTS. Ala2 carries the post-translational modification N-acetylalanine. The short motif at 9 to 12 is the nuclear localization signal (NLS) element; it reads KRKR. Ser23 carries the post-translational modification Phosphoserine. Residues Lys137 and Lys141 each carry the N6-acetyllysine modification. The nuclear export sequence (NES) motif lies at 141 to 153; that stretch reads KYMRQDLRLIRET. Residues Trp174, Glu184, Asp204, Lys206, and 267–278 contribute to the substrate site; that span reads HYLPSYYHLHVH. The short motif at 274–278 is the Histidine triad motif element; that stretch reads HLHVH. Catalysis depends on His276, which acts as the Nucleophile.

Belongs to the HIT family. In terms of assembly, homodimer. Associates with components of the exosome multienzyme ribonuclease complex, such as EXOSC3 and EXOSC4. Interacts with NDOR1.

It is found in the cytoplasm. Its subcellular location is the nucleus. The enzyme catalyses a 5'-end (N(7)-methyl 5'-triphosphoguanosine)-ribonucleoside in mRNA + H2O = N(7)-methyl-GMP + a 5'-end diphospho-ribonucleoside in mRNA + 2 H(+). Its activity is regulated as follows. The hydrolytic product 7-methylguanosine diphosphate (m7GDP) efficiently inhibits the decapping scavenger activity and acts as a competitive inhibitor in vitro. Inhibited by 2,4-diaminoquinazoline. Decapping scavenger enzyme that catalyzes the cleavage of a residual cap structure following the degradation of mRNAs by the 3'-&gt;5' exosome-mediated mRNA decay pathway. Hydrolyzes cap analog structures like 7-methylguanosine nucleoside triphosphate (m7GpppG) with up to 10 nucleotide substrates (small capped oligoribonucleotides) and specifically releases 5'-phosphorylated RNA fragments and 7-methylguanosine monophosphate (m7GMP). Cleaves cap analog structures like tri-methyl guanosine nucleoside triphosphate (m3(2,2,7)GpppG) with very poor efficiency. Does not hydrolyze unmethylated cap analog (GpppG) and shows no decapping activity on intact m7GpppG-capped mRNA molecules longer than 25 nucleotides. Does not hydrolyze 7-methylguanosine diphosphate (m7GDP) to m7GMP. May also play a role in the 5'-&gt;3 mRNA decay pathway; m7GDP, the downstream product released by the 5'-&gt;3' mRNA mediated decapping activity, may be also converted by DCPS to m7GMP. Binds to m7GpppG and strongly to m7GDP. Plays a role in first intron splicing of pre-mRNAs. Inhibits activation-induced cell death. In Rattus norvegicus (Rat), this protein is m7GpppX diphosphatase (Dcps).